The sequence spans 136 residues: Histone H3 (136 aa).

The interval 1–43 (MARTKQTARKSTGGKAPRKQLATKAARKSAPATGGVKKPHRYR) is disordered. An N6-methylated lysine modification is found at Lys-5. At Lys-10 the chain carries N6-acetyllysine; alternate. Lys-10 is subject to N6-methylated lysine; alternate. At Ser-11 the chain carries Phosphoserine. 2 positions are modified to N6-acetyllysine: Lys-15 and Lys-24. Residues Lys-28, Lys-37, and Lys-80 each carry the N6-methylated lysine modification.

It belongs to the histone H3 family. As to quaternary structure, the nucleosome is a histone octamer containing two molecules each of H2A, H2B, H3 and H4 assembled in one H3-H4 heterotetramer and two H2A-H2B heterodimers. The octamer wraps approximately 147 bp of DNA. Acetylation is generally linked to gene activation. Post-translationally, methylation at Lys-5 is linked to gene activation. Methylation at Lys-10 is linked to gene repression.

It is found in the nucleus. It localises to the chromosome. Functionally, core component of nucleosome. Nucleosomes wrap and compact DNA into chromatin, limiting DNA accessibility to the cellular machineries which require DNA as a template. Histones thereby play a central role in transcription regulation, DNA repair, DNA replication and chromosomal stability. DNA accessibility is regulated via a complex set of post-translational modifications of histones, also called histone code, and nucleosome remodeling. The protein is Histone H3 of Platynereis dumerilii (Dumeril's clam worm).